Reading from the N-terminus, the 1342-residue chain is DNA-directed RNA polymerase subunit beta (1342 aa).

This sequence belongs to the RNA polymerase beta chain family. As to quaternary structure, the RNAP catalytic core consists of 2 alpha, 1 beta, 1 beta' and 1 omega subunit. When a sigma factor is associated with the core the holoenzyme is formed, which can initiate transcription.

It carries out the reaction RNA(n) + a ribonucleoside 5'-triphosphate = RNA(n+1) + diphosphate. Its function is as follows. DNA-dependent RNA polymerase catalyzes the transcription of DNA into RNA using the four ribonucleoside triphosphates as substrates. This is DNA-directed RNA polymerase subunit beta from Vibrio parahaemolyticus serotype O3:K6 (strain RIMD 2210633).